Here is a 395-residue protein sequence, read N- to C-terminus: LL-diaminopimelate aminotransferase (395 aa).

Substrate is bound by residues tyrosine 14 and glycine 41. Pyridoxal 5'-phosphate is bound by residues tyrosine 71, 104–105 (AK), tyrosine 128, asparagine 174, tyrosine 205, and 233–235 (SFS). Lysine 105, tyrosine 128, and asparagine 174 together coordinate substrate. An N6-(pyridoxal phosphate)lysine modification is found at lysine 236. Positions 244 and 275 each coordinate pyridoxal 5'-phosphate. Substrate-binding residues include asparagine 275 and arginine 368.

This sequence belongs to the class-I pyridoxal-phosphate-dependent aminotransferase family. LL-diaminopimelate aminotransferase subfamily. Homodimer. Requires pyridoxal 5'-phosphate as cofactor.

It catalyses the reaction (2S,6S)-2,6-diaminopimelate + 2-oxoglutarate = (S)-2,3,4,5-tetrahydrodipicolinate + L-glutamate + H2O + H(+). The protein operates within amino-acid biosynthesis; L-lysine biosynthesis via DAP pathway; LL-2,6-diaminopimelate from (S)-tetrahydrodipicolinate (aminotransferase route): step 1/1. In terms of biological role, involved in the synthesis of meso-diaminopimelate (m-DAP or DL-DAP), required for both lysine and peptidoglycan biosynthesis. Catalyzes the direct conversion of tetrahydrodipicolinate to LL-diaminopimelate. This chain is LL-diaminopimelate aminotransferase, found in Chlamydia caviae (strain ATCC VR-813 / DSM 19441 / 03DC25 / GPIC) (Chlamydophila caviae).